Reading from the N-terminus, the 743-residue chain is NAD(P)H-quinone oxidoreductase subunit 5, chloroplastic (743 aa).

14 helical membrane-spanning segments follow: residues 9-29 (WIIP…LLLF), 40-60 (WAFH…DLSI), 89-109 (IDPL…MVLI), 125-145 (FAYM…SNLI), 147-167 (IYIF…FWFT), 184-204 (IGDL…GSFE), 219-239 (NEVN…GAVA), 258-278 (TPIS…FLVA), 280-300 (LLPL…IGII), 396-416 (TAFF…CFWS), 425-445 (WLYS…TAFY), 548-568 (LLPL…GIPF), 607-627 (IFSV…YKPV), and 723-743 (YLFL…FLNL).

It belongs to the complex I subunit 5 family. As to quaternary structure, NDH is composed of at least 16 different subunits, 5 of which are encoded in the nucleus.

The protein localises to the plastid. It is found in the chloroplast thylakoid membrane. The catalysed reaction is a plastoquinone + NADH + (n+1) H(+)(in) = a plastoquinol + NAD(+) + n H(+)(out). It carries out the reaction a plastoquinone + NADPH + (n+1) H(+)(in) = a plastoquinol + NADP(+) + n H(+)(out). Functionally, NDH shuttles electrons from NAD(P)H:plastoquinone, via FMN and iron-sulfur (Fe-S) centers, to quinones in the photosynthetic chain and possibly in a chloroplast respiratory chain. The immediate electron acceptor for the enzyme in this species is believed to be plastoquinone. Couples the redox reaction to proton translocation, and thus conserves the redox energy in a proton gradient. The polypeptide is NAD(P)H-quinone oxidoreductase subunit 5, chloroplastic (ndhF) (Carpenteria californica (Tree anemone)).